Here is a 72-residue protein sequence, read N- to C-terminus: Lantibiotic lichenicidin VK21 A2 (72 aa).

The tract at residues 1-21 (MKTMKNSAAREAFKGANHPAG) is disordered. A propeptide spanning residues 1-40 (MKTMKNSAAREAFKGANHPAGMVSEEELKALVGGNDVNPE) is cleaved from the precursor. Threonine 41 carries the post-translational modification 2-oxobutanoic acid. (Z)-2,3-didehydrobutyrine is present on residues threonine 42, threonine 45, and threonine 46. The segment at residues 47-51 (SSWTC) is a cross-link (lanthionine (Ser-Cys)). At serine 48 the chain carries 2,3-didehydroalanine (Ser). 2 positions are modified to (Z)-2,3-didehydrobutyrine: threonine 53 and threonine 57. Positions 59–63 (SASLC) form a cross-link, lanthionine (Ser-Cys). 2 cross-links (beta-methyllanthionine (Thr-Cys)) span residues 65-68 (TTKC) and 69-72 (TSRC). A (Z)-2,3-didehydrobutyrine modification is found at threonine 66.

Post-translationally, maturation of lantibiotics involves the enzymatic conversion of Thr, and Ser into dehydrated AA and the formation of thioether bonds with cysteine. This is followed by membrane translocation and cleavage of the modified precursor. In terms of processing, the 2,3-didehydrobutyrines are determined to be the Z-isomers.

The protein localises to the secreted. Functionally, lanthionine-containing peptide antibiotic (lantibiotic) active on Gram-positive bacteria. The bactericidal activity of lantibiotics is based on depolarization of energized bacterial cytoplasmic membranes, initiated by the formation of aqueous transmembrane pores. When present individually, LchA2 exhibits activity towards B.subtilis L1 (IC(50)=30 uM), Rhodococcus sp. SS2 (IC(50)=16.6 uM), M.luteus B1314 (IC(50)=2.6 uM), B.megaterium VKM41 (IC(50)=2 uM), S.aureus 209p (IC(50)=20 uM), B.pumilus 2001, B.globigii I, B.amyloliquefaciens I, M.smegmatis 1171 and M.phlei 1291. However, when combined with LchA1, it displays much stronger activity against B.subtilis L1 (IC(50)=0.64 uM), Rhodococcus sp. SS2 (IC(50)=0.64 uM), M.luteus B1314 (IC(50)=0.09 uM), B.megaterium VKM41 (IC(50)=0.12 uM) and S.aureus 209p (IC(50)=0.64 uM). The activity of the combined LchA1 and LchA2 peptides is strongest at a molar ratio of 1. Even when applied at 17-fold concentration of the highest IC(50) values for Gram-positive bacteria, neither the individual nor the combined peptides display activity against Gram-negative bacteria P.aeruginosa PAO1, P.putida I-97 or E.coli C600. This Bacillus licheniformis protein is Lantibiotic lichenicidin VK21 A2.